A 217-amino-acid polypeptide reads, in one-letter code: Glycerol-3-phosphate acyltransferase (217 aa).

A run of 5 helical transmembrane segments spans residues 1–21, 54–74, 84–104, 126–146, and 165–185; these read MAWAISGLLVILGYLLGSIPT, TAAIAVLIIDMLKAMVAVGGV, AIVPLDWKPWLIVTVASAAIL, VLLVLNPLVALGALASFLFML, and LLMLVLHQPLAYILFAILAGI.

This sequence belongs to the PlsY family. As to quaternary structure, probably interacts with PlsX.

The protein resides in the cell inner membrane. It catalyses the reaction an acyl phosphate + sn-glycerol 3-phosphate = a 1-acyl-sn-glycero-3-phosphate + phosphate. It participates in lipid metabolism; phospholipid metabolism. Functionally, catalyzes the transfer of an acyl group from acyl-phosphate (acyl-PO(4)) to glycerol-3-phosphate (G3P) to form lysophosphatidic acid (LPA). This enzyme utilizes acyl-phosphate as fatty acyl donor, but not acyl-CoA or acyl-ACP. This Rippkaea orientalis (strain PCC 8801 / RF-1) (Cyanothece sp. (strain PCC 8801)) protein is Glycerol-3-phosphate acyltransferase.